A 148-amino-acid chain; its full sequence is Protein Turandot Z (148 aa).

Positions 1–23 are cleaved as a signal peptide; the sequence is MYFAIRLSFVLAVLFCLTGNGSA.

This sequence belongs to the Turandot family.

It is found in the secreted. A humoral factor that may play a role in stress tolerance. The sequence is that of Protein Turandot Z from Drosophila simulans (Fruit fly).